The chain runs to 132 residues: Small ribosomal subunit protein uS8 (132 aa).

It belongs to the universal ribosomal protein uS8 family. Part of the 30S ribosomal subunit. Contacts proteins S5 and S12.

Its function is as follows. One of the primary rRNA binding proteins, it binds directly to 16S rRNA central domain where it helps coordinate assembly of the platform of the 30S subunit. This chain is Small ribosomal subunit protein uS8, found in Rhodopseudomonas palustris (strain BisB18).